The following is a 51-amino-acid chain: Basic phospholipase A2 Bfon11 (51 aa).

Residues Tyr27, Gly29, and Gly31 each coordinate Ca(2+). Cys28 and Cys43 form a disulfide bridge. His46 is an active-site residue. Ca(2+) is bound at residue Asp47.

The protein belongs to the phospholipase A2 family. Group II subfamily. D49 sub-subfamily. Ca(2+) is required as a cofactor. Expressed by the venom gland.

It localises to the secreted. The enzyme catalyses a 1,2-diacyl-sn-glycero-3-phosphocholine + H2O = a 1-acyl-sn-glycero-3-phosphocholine + a fatty acid + H(+). Its function is as follows. Snake venom phospholipase A2 (PLA2) that impairs hemostasis. PLA2 catalyzes the calcium-dependent hydrolysis of the 2-acyl groups in 3-sn-phosphoglycerides. The polypeptide is Basic phospholipase A2 Bfon11 (Bothrops fonsecai (Fonseca's lancehead)).